We begin with the raw amino-acid sequence, 193 residues long: Superoxide dismutase [Fe] (193 aa).

H27 contacts Fe cation. The residue at position 51 (K51) is an N6-acetyllysine. Residues H74, D157, and H161 each coordinate Fe cation.

The protein belongs to the iron/manganese superoxide dismutase family. Homodimer. Fe cation is required as a cofactor.

The enzyme catalyses 2 superoxide + 2 H(+) = H2O2 + O2. Its function is as follows. Destroys superoxide anion radicals which are normally produced within the cells and which are toxic to biological systems. This Escherichia coli O157:H7 protein is Superoxide dismutase [Fe] (sodB).